The sequence spans 944 residues: MGRRFKFLQKLAFLGQNHRYKALERDEVDTLIDEQYELKAIEREKAVAALPPREACKCSKEELARTFHVDLDSGLSEFAVAQRRLVHGWNEFVTDNTEPVWKKYLDQFRNPLILLLLGSSVVSVLTKEYEDAISIALAVLIVVTVGFIQEYRSEKSLEELTKLVPPECNCLRDGKLRHMLARDLVPGDVVSLSMGDRIPADIRLTEVTDLLVDESSFTGEVEPCSKTDSPLAGGGDLSTLSNVVFMGTLVQCGKGQGVVIGTGEQSQFGEVFKMMRAEETPKTPLQKSMDKLGKQLTVFSFGIIGLLMLVGWVQGKPLLSMFTIGVSLAVAAIPEGLPIVVMVTLVLGVLRMAKKRVIVKKLPIVETLGCCNVICSDKTGTLTANEMTATQLVTSDGFHAEVSGIGYSGEGTVCLLPSKEVIKEFSNVSVGKLVEAGCVANNAVVRKNAVMGQPTEGALVVLAMKMNLGSIKDSYIRKKEIPFSSEQKWMAVRCSLKNEDEEDVYFMKGAFEEVIHHCSTYNNGGIPLPLTPQQKSYCQQEEKKMGSLGLRVLALASGPELGRLTFLGLVGIIDPPRAGVKEAVQALSESDVSVKMVTGDALETALAIGRTIGLCDEKLKAMSGEEVEGMEQDALAARVRQVSVFFRTSPKHKVKIIKALQESGAIVAMTGDGVNDSVALKSADIGIAMGQTGTDVSKEAADMILVDDDFSAIMSAVEEGKGIFYNIKNFVRFQLSTSIAALSLITLSTVCNLPNPLNAMQILWVNIIMDGPPAQSLGVEPVDRDALKRPPRSVKDTILNRALILKILMSAAVILGGTLFIFWREIPENRTSTPRTTTMAFTCFVFFDLFNALSCRSQTKLIFEIGFFRNRMFLYSILGSLLGQLAVIYAPPLQKVFQTENLSALDLLLLTGLASSVFILSELLKLCEKFCSRAKADQMLPEAV.

Residues 1–104 lie on the Cytoplasmic side of the membrane; the sequence is MGRRFKFLQK…DNTEPVWKKY (104 aa). The tract at residues 69–93 is interaction with ORAI1; sequence VDLDSGLSEFAVAQRRLVHGWNEFV. A helical membrane pass occupies residues 105–125; the sequence is LDQFRNPLILLLLGSSVVSVL. The Extracellular segment spans residues 126–127; the sequence is TK. A helical transmembrane segment spans residues 128–148; that stretch reads EYEDAISIALAVLIVVTVGFI. Topologically, residues 149–229 are cytoplasmic; it reads QEYRSEKSLE…EVEPCSKTDS (81 aa). Residues 230-250 traverse the membrane as a helical segment; that stretch reads PLAGGGDLSTLSNVVFMGTLV. Residues 251–291 lie on the Extracellular side of the membrane; the sequence is QCGKGQGVVIGTGEQSQFGEVFKMMRAEETPKTPLQKSMDK. Thr262 carries the post-translational modification Phosphothreonine. At Ser266 the chain carries Phosphoserine. The chain crosses the membrane as a helical span at residues 292–312; it reads LGKQLTVFSFGIIGLLMLVGW. Over 313-329 the chain is Cytoplasmic; it reads VQGKPLLSMFTIGVSLA. Ca(2+)-binding residues include Val330, Ala331, Ile333, and Glu335. The chain crosses the membrane as a helical span at residues 330-350; the sequence is VAAIPEGLPIVVMVTLVLGVL. Topologically, residues 351 to 748 are extracellular; sequence RMAKKRVIVK…IAALSLITLS (398 aa). The active-site 4-aspartylphosphate intermediate is Asp377. Mg(2+) is bound by residues Asp672 and Asp676. Residues 749–769 form a helical membrane-spanning segment; sequence TVCNLPNPLNAMQILWVNIIM. Positions 766 and 770 each coordinate Ca(2+). At 770–802 the chain is on the cytoplasmic side; sequence DGPPAQSLGVEPVDRDALKRPPRSVKDTILNRA. The helical transmembrane segment at 803-823 threads the bilayer; sequence LILKILMSAAVILGGTLFIFW. Topologically, residues 824 to 835 are extracellular; sequence REIPENRTSTPR. The helical transmembrane segment at 836–853 threads the bilayer; the sequence is TTTMAFTCFVFFDLFNAL. At 854–872 the chain is on the cytoplasmic side; that stretch reads SCRSQTKLIFEIGFFRNRM. The helical transmembrane segment at 873–893 threads the bilayer; sequence FLYSILGSLLGQLAVIYAPPL. Residues 894 to 903 are Extracellular-facing; that stretch reads QKVFQTENLS. The chain crosses the membrane as a helical span at residues 904-924; the sequence is ALDLLLLTGLASSVFILSELL. The Cytoplasmic portion of the chain corresponds to 925-944; sequence KLCEKFCSRAKADQMLPEAV.

Belongs to the cation transport ATPase (P-type) (TC 3.A.3) family. Type IIA subfamily. As to quaternary structure, interacts (via N-terminus) with ORAI1 (via N- and C-termini); this interaction regulates Ca(2+) influx at the plasma membrane.

It localises to the golgi apparatus. Its subcellular location is the trans-Golgi network membrane. The protein resides in the cell membrane. It is found in the basolateral cell membrane. The catalysed reaction is Ca(2+)(in) + ATP + H2O = Ca(2+)(out) + ADP + phosphate + H(+). The enzyme catalyses Mn(2+)(in) + ATP + H2O = Mn(2+)(out) + ADP + phosphate + H(+). Functionally, ATP-driven pump that supplies the Golgi apparatus with Ca(2+) and Mn(2+) ions, both essential cofactors for processing and trafficking of newly synthesized proteins in the secretory pathway. Within a catalytic cycle, acquires Ca(2+) or Mn(2+) ions on the cytoplasmic side of the membrane and delivers them to the lumenal side. The transfer of ions across the membrane is coupled to ATP hydrolysis and is associated with a transient phosphorylation that shifts the pump conformation from inward-facing to outward-facing state. Induces Ca(2+) influx independently of its ATP-driven pump function. At the basolateral membrane of mammary epithelial cells, interacts with Ca(2+) channel ORAI1 and mediates Ca(2+) entry independently of the Ca(2+) content of endoplasmic reticulum or Golgi stores. May facilitate transepithelial transport of large quantities of Ca(2+) for milk secretion via activation of Ca(2+) influx channels at the plasma membrane and active Ca(2+) transport at the Golgi apparatus. The chain is Calcium-transporting ATPase type 2C member 2 (Atp2c2) from Rattus norvegicus (Rat).